The sequence spans 156 residues: Putative pre-16S rRNA nuclease (156 aa).

It belongs to the YqgF nuclease family.

It localises to the cytoplasm. In terms of biological role, could be a nuclease involved in processing of the 5'-end of pre-16S rRNA. In Rickettsia typhi (strain ATCC VR-144 / Wilmington), this protein is Putative pre-16S rRNA nuclease.